The chain runs to 323 residues: Acetyl esterase (323 aa).

The Involved in the stabilization of the negatively charged intermediate by the formation of the oxyanion hole signature appears at 91-93; it reads HGG. Residues S165, D262, and H292 contribute to the active site.

Belongs to the 'GDXG' lipolytic enzyme family. Homodimer. Interacts with MalT and MelA.

The protein localises to the cytoplasm. Displays esterase activity towards short chain fatty esters (acyl chain length of up to 8 carbons). Able to hydrolyze triacetylglycerol (triacetin) and tributyrylglycerol (tributyrin), but not trioleylglycerol (triolein) or cholesterol oleate. Negatively regulates MalT activity by antagonizing maltotriose binding. Inhibits MelA galactosidase activity. This is Acetyl esterase from Salmonella paratyphi B (strain ATCC BAA-1250 / SPB7).